The primary structure comprises 409 residues: Probable plastid-lipid-associated protein 12, chloroplastic (409 aa).

The N-terminal 55 residues, 1-55 (MVAVRFYAVEMSLPCLCPCPSSPISLSLCSPRFNLLNTTSRRLGLSRNCRTLRIS), are a transit peptide targeting the chloroplast.

This sequence belongs to the PAP/fibrillin family.

It localises to the plastid. It is found in the chloroplast thylakoid. In Arabidopsis thaliana (Mouse-ear cress), this protein is Probable plastid-lipid-associated protein 12, chloroplastic (PAP12).